Consider the following 360-residue polypeptide: Histidinol-phosphate aminotransferase (360 aa).

At lysine 218 the chain carries N6-(pyridoxal phosphate)lysine.

This sequence belongs to the class-II pyridoxal-phosphate-dependent aminotransferase family. Histidinol-phosphate aminotransferase subfamily. Homodimer. Pyridoxal 5'-phosphate is required as a cofactor.

The catalysed reaction is L-histidinol phosphate + 2-oxoglutarate = 3-(imidazol-4-yl)-2-oxopropyl phosphate + L-glutamate. Its pathway is amino-acid biosynthesis; L-histidine biosynthesis; L-histidine from 5-phospho-alpha-D-ribose 1-diphosphate: step 7/9. This chain is Histidinol-phosphate aminotransferase, found in Chlorobium phaeobacteroides (strain DSM 266 / SMG 266 / 2430).